We begin with the raw amino-acid sequence, 269 residues long: Extracellular metalloprotease UREG_07765 (269 aa).

The first 18 residues, 1 to 18, serve as a signal peptide directing secretion; it reads MRLSVSLLALAFGSLVAA. N-linked (GlcNAc...) asparagine glycosylation is present at asparagine 179. Zn(2+) is bound at residue histidine 191. Glutamate 192 is an active-site residue. Histidine 195 serves as a coordination point for Zn(2+). The interval 207–227 is disordered; sequence VSDTPPQRSSTQGCPSSRDSC. Polar residues predominate over residues 210–225; that stretch reads TPPQRSSTQGCPSSRD. Cysteine 220 and cysteine 246 are oxidised to a cystine.

This sequence belongs to the peptidase M43B family.

It localises to the secreted. Its function is as follows. Secreted metalloproteinase that allows assimilation of proteinaceous substrates. This Uncinocarpus reesii (strain UAMH 1704) protein is Extracellular metalloprotease UREG_07765.